The primary structure comprises 318 residues: Beta-ketoacyl-[acyl-carrier-protein] synthase III (318 aa).

Active-site residues include cysteine 112 and histidine 245. Residues 246–250 (QANIR) are ACP-binding. Residue asparagine 275 is part of the active site.

Belongs to the thiolase-like superfamily. FabH family. Homodimer.

It is found in the cytoplasm. The enzyme catalyses malonyl-[ACP] + acetyl-CoA + H(+) = 3-oxobutanoyl-[ACP] + CO2 + CoA. Its pathway is lipid metabolism; fatty acid biosynthesis. In terms of biological role, catalyzes the condensation reaction of fatty acid synthesis by the addition to an acyl acceptor of two carbons from malonyl-ACP. Catalyzes the first condensation reaction which initiates fatty acid synthesis and may therefore play a role in governing the total rate of fatty acid production. Possesses both acetoacetyl-ACP synthase and acetyl transacylase activities. Its substrate specificity determines the biosynthesis of branched-chain and/or straight-chain of fatty acids. The protein is Beta-ketoacyl-[acyl-carrier-protein] synthase III of Rickettsia conorii (strain ATCC VR-613 / Malish 7).